The sequence spans 560 residues: Oxygen-dependent choline dehydrogenase 1 (560 aa).

8 to 37 (DYIIIGAGSAGNVLATRLTEDPDVQVLLLE) provides a ligand contact to FAD. Residue H475 is the Proton acceptor of the active site.

This sequence belongs to the GMC oxidoreductase family. Requires FAD as cofactor.

The catalysed reaction is choline + A = betaine aldehyde + AH2. The enzyme catalyses betaine aldehyde + NAD(+) + H2O = glycine betaine + NADH + 2 H(+). It participates in amine and polyamine biosynthesis; betaine biosynthesis via choline pathway; betaine aldehyde from choline (cytochrome c reductase route): step 1/1. In terms of biological role, involved in the biosynthesis of the osmoprotectant glycine betaine. Catalyzes the oxidation of choline to betaine aldehyde and betaine aldehyde to glycine betaine at the same rate. The sequence is that of Oxygen-dependent choline dehydrogenase 1 from Chromohalobacter salexigens (strain ATCC BAA-138 / DSM 3043 / CIP 106854 / NCIMB 13768 / 1H11).